The following is a 216-amino-acid chain: Probable transaldolase (216 aa).

Lys84 functions as the Schiff-base intermediate with substrate in the catalytic mechanism.

Belongs to the transaldolase family. Type 3B subfamily.

The protein localises to the cytoplasm. It catalyses the reaction D-sedoheptulose 7-phosphate + D-glyceraldehyde 3-phosphate = D-erythrose 4-phosphate + beta-D-fructose 6-phosphate. The protein operates within carbohydrate degradation; pentose phosphate pathway; D-glyceraldehyde 3-phosphate and beta-D-fructose 6-phosphate from D-ribose 5-phosphate and D-xylulose 5-phosphate (non-oxidative stage): step 2/3. In terms of biological role, transaldolase is important for the balance of metabolites in the pentose-phosphate pathway. The protein is Probable transaldolase of Lysinibacillus sphaericus (strain C3-41).